Here is a 418-residue protein sequence, read N- to C-terminus: Queuine tRNA-ribosyltransferase accessory subunit 2 (418 aa).

Zn(2+) is bound by residues C325, C327, C330, and H356.

The protein belongs to the queuine tRNA-ribosyltransferase family. QTRT2 subfamily. Heterodimer of a catalytic subunit and an accessory subunit. Zn(2+) serves as cofactor.

It localises to the cytoplasm. Non-catalytic subunit of the queuine tRNA-ribosyltransferase (TGT) that catalyzes the base-exchange of a guanine (G) residue with queuine (Q) at position 34 (anticodon wobble position) in tRNAs with GU(N) anticodons (tRNA-Asp, -Asn, -His and -Tyr), resulting in the hypermodified nucleoside queuosine (7-(((4,5-cis-dihydroxy-2-cyclopenten-1-yl)amino)methyl)-7-deazaguanosine). The protein is Queuine tRNA-ribosyltransferase accessory subunit 2 of Drosophila sechellia (Fruit fly).